A 351-amino-acid polypeptide reads, in one-letter code: Inner kinetochore subunit fta2 (351 aa).

Residues methionine 1–arginine 71 form a disordered region. The segment covering serine 7–serine 18 has biased composition (low complexity). The segment covering asparagine 54–arginine 66 has biased composition (polar residues).

The protein belongs to the CENP-P/CTF19 family. In terms of assembly, component of the heterotetrameric kinetochore subcomplex COMA, which consists of fta2, fta7, mal2 and mis17. The COMA subcomplex is part of a larger constitutive centromere-associated network (CCAN) (also known as central kinetochore Sim4 complex in fission yeast), which is composed of at least cnl2, cnp3, cnp20, fta1, fta2, fta3, fta4, fta6, fta7, mal2, mhf1, mhf2, mis6, mis15, mis17, sim4 and wip1.

Its subcellular location is the nucleus. The protein localises to the chromosome. The protein resides in the centromere. It localises to the kinetochore. Its function is as follows. Component of the kinetochore, a multiprotein complex that assembles on centromeric DNA and attaches chromosomes to spindle microtubules, mediating chromosome segregation and sister chromatid segregation during meiosis and mitosis. Component of the inner kinetochore COMA complex, which connects centromere-associated proteins and the outer kinetochore. COMA interacts with other inner kinetochore proteins to form the inner kinetochore constitutive centromere-associated network (CCAN), which serves as a structural platform for outer kinetochore assembly. Fta2, fta3 and fta4 associate with the central core (cnt) and inner repeat (inr) region of the centromere. This is Inner kinetochore subunit fta2 (fta2) from Schizosaccharomyces pombe (strain 972 / ATCC 24843) (Fission yeast).